Here is a 123-residue protein sequence, read N- to C-terminus: Glycophorin-B (123 aa).

The N-terminal stretch at methionine 1–alanine 19 is a signal peptide. A helical membrane pass occupies residues valine 93–isoleucine 113.

This sequence belongs to the glycophorin-A family. As to quaternary structure, component of the ankyrin-1 complex in the erythrocyte, composed of ANK1, RHCE, RHAG, SLC4A1, EPB42, GYPA, GYPB and AQP1. Interacts (via the N-terminal) with RHAG; this interaction bridges the (RHAG)2(RHCE) heterotrimer with the SLC4A1 Band 3 I dimer complexed with GYPA. The N-terminal extracellular domain is heavily glycosylated on serine and threonine residues.

Its subcellular location is the cell membrane. Functionally, component of the ankyrin-1 complex, a multiprotein complex involved in the stability and shape of the erythrocyte membrane. This Pan troglodytes (Chimpanzee) protein is Glycophorin-B.